A 358-amino-acid chain; its full sequence is Extracellular phospholipase C (358 aa).

Its subcellular location is the secreted. The polypeptide is Extracellular phospholipase C (plcA) (Dickeya chrysanthemi (Pectobacterium chrysanthemi)).